The primary structure comprises 354 residues: MDFQGSIPTYIYDIDYSMSAPCQKVNVKQIAAQLLPPLYSLVFIFGFVGNMMVFLILISCKKLKSMTDIYLFNLAISDLLFLLTLPFWAHYAANEWVFGNIMCKLFTGIYHIGYFGGIFFIILLTIDRYLAIVHAVFAIKARTVNFGVITSVVTWVVAVFVSLPEIIFMRSQKEGSHYTCSPHFLHIQYRFWKHFQTLKMVILSLILPLLVMVICYSGILNTLFRCRNEKKRHRAVRLIFAIMIVYFLFWTPYNIVLLLTTFQEYFGLNNCSSSNRLDQAMQVTETLGMTHCCLNPVIYAFVGEKFRNYLSVFFRKHIVKRFCKHCSIFQQVNPDRVSSVYTRSTGEQEVSTGL.

At 1–32 the chain is on the extracellular side; that stretch reads MDFQGSIPTYIYDIDYSMSAPCQKVNVKQIAA. Residue S6 is glycosylated (O-linked (GalNAc...) serine). Sulfotyrosine is present on residues Y10 and Y16. 2 cysteine pairs are disulfide-bonded: C22-C271 and C103-C180. Residues 33 to 60 form a helical membrane-spanning segment; the sequence is QLLPPLYSLVFIFGFVGNMMVFLILISC. Residues 61-70 are Cytoplasmic-facing; it reads KKLKSMTDIY. A helical membrane pass occupies residues 71-91; sequence LFNLAISDLLFLLTLPFWAHY. The Extracellular segment spans residues 92-104; the sequence is AANEWVFGNIMCK. A helical membrane pass occupies residues 105–126; sequence LFTGIYHIGYFGGIFFIILLTI. Residues 127-143 are Cytoplasmic-facing; it reads DRYLAIVHAVFAIKART. A helical transmembrane segment spans residues 144–168; that stretch reads VNFGVITSVVTWVVAVFVSLPEIIF. The Extracellular portion of the chain corresponds to 169-200; that stretch reads MRSQKEGSHYTCSPHFLHIQYRFWKHFQTLKM. A helical membrane pass occupies residues 201 to 220; that stretch reads VILSLILPLLVMVICYSGIL. Residues 221–237 lie on the Cytoplasmic side of the membrane; it reads NTLFRCRNEKKRHRAVR. A helical transmembrane segment spans residues 238 to 262; sequence LIFAIMIVYFLFWTPYNIVLLLTTF. Topologically, residues 263 to 279 are extracellular; sequence QEYFGLNNCSSSNRLDQ. The chain crosses the membrane as a helical span at residues 280 to 303; that stretch reads AMQVTETLGMTHCCLNPVIYAFVG. Over 304-354 the chain is Cytoplasmic; the sequence is EKFRNYLSVFFRKHIVKRFCKHCSIFQQVNPDRVSSVYTRSTGEQEVSTGL. 2 S-palmitoyl cysteine lipidation sites follow: C323 and C326. Phosphoserine; by BARK1 occurs at positions 338, 339, 344, and 351.

Belongs to the G-protein coupled receptor 1 family. In terms of assembly, interacts with PRAF2. Efficient ligand binding to CCL3/MIP-1alpha and CCL4/MIP-1beta requires sulfation, O-glycosylation and sialic acid modifications. Glycosylation on Ser-6 is required for efficient binding of CCL4. Interacts with GRK2. Interacts with ARRB1 and ARRB2. Interacts with CNIH4. Interacts with S100A4; this interaction stimulates T-lymphocyte chemotaxis. Post-translationally, sulfated on at least 2 of the N-terminal tyrosines. Sulfation is required for efficient binding of the chemokines, CCL3 and CCL4. In terms of processing, O-glycosylated, but not N-glycosylated. Ser-6 appears to be the major site. Also sialylated glycans present which contribute to chemokine binding. Ser-17 may also be glycosylated and, if so, with small moieties such as a T-antigen. Palmitoylation in the C-terminal is important for cell surface expression. Post-translationally, phosphorylation on serine residues in the C-terminal is stimulated by binding CC chemokines especially by APO-RANTES.

The protein resides in the cell membrane. Its function is as follows. Receptor for a number of inflammatory CC-chemokines including CCL3/MIP-1-alpha, CCL4/MIP-1-beta and RANTES and subsequently transduces a signal by increasing the intracellular calcium ion level. May play a role in the control of granulocytic lineage proliferation or differentiation. Participates in T-lymphocyte migration to the infection site by acting as a chemotactic receptor. In Rattus norvegicus (Rat), this protein is C-C chemokine receptor type 5 (Ccr5).